We begin with the raw amino-acid sequence, 398 residues long: tRNA-specific 2-thiouridylase MnmA (398 aa).

ATP is bound by residues 19 to 26 (AMSGGVDS) and Leu45. Cys113 (nucleophile) is an active-site residue. Residues Cys113 and Cys210 are joined by a disulfide bond. Gly137 lines the ATP pocket. The tract at residues 160–162 (RDQ) is interaction with tRNA. Cys210 serves as the catalytic Cysteine persulfide intermediate.

Belongs to the MnmA/TRMU family.

The protein resides in the cytoplasm. It catalyses the reaction S-sulfanyl-L-cysteinyl-[protein] + uridine(34) in tRNA + AH2 + ATP = 2-thiouridine(34) in tRNA + L-cysteinyl-[protein] + A + AMP + diphosphate + H(+). Catalyzes the 2-thiolation of uridine at the wobble position (U34) of tRNA, leading to the formation of s(2)U34. This is tRNA-specific 2-thiouridylase MnmA from Rhodopseudomonas palustris (strain BisB5).